Here is a 414-residue protein sequence, read N- to C-terminus: Myb1 protein (414 aa).

Myb-like domains are found at residues 242-266 (WNEV…LYYG), 268-320 (FEDD…IKIN), and 328-381 (KVKL…TNLN).

It is found in the nucleus. Transcriptional activator. Has a role in the parasite erythrocytic cycle where it directly regulates key genes involved in cell cycle regulation and progression. Binds directly to Myb regulatory elements. This is Myb1 protein from Plasmodium falciparum (isolate 3D7).